The following is a 227-amino-acid chain: 2,3-bisphosphoglycerate-dependent phosphoglycerate mutase (227 aa).

Substrate is bound by residues 8–15 (RHGQSIWN), 21–22 (TG), arginine 58, 110–113 (ERYY), lysine 121, 137–138 (RR), and 181–182 (GN). The active-site Tele-phosphohistidine intermediate is the histidine 9. Residue glutamate 110 is the Proton donor/acceptor of the active site.

The protein belongs to the phosphoglycerate mutase family. BPG-dependent PGAM subfamily. As to quaternary structure, homodimer.

The catalysed reaction is (2R)-2-phosphoglycerate = (2R)-3-phosphoglycerate. The protein operates within carbohydrate degradation; glycolysis; pyruvate from D-glyceraldehyde 3-phosphate: step 3/5. Functionally, catalyzes the interconversion of 2-phosphoglycerate and 3-phosphoglycerate. The protein is 2,3-bisphosphoglycerate-dependent phosphoglycerate mutase of Pseudoalteromonas atlantica (strain T6c / ATCC BAA-1087).